A 215-amino-acid chain; its full sequence is Cytochrome b6 (215 aa).

A helical membrane pass occupies residues 32 to 52 (IFHCLGGITLTCFLVQVATGF). Cys35 lines the heme c pocket. Heme b is bound by residues His86 and His100. 3 helical membrane-spanning segments follow: residues 90–110 (ASMM…TGGF), 116–136 (LTWV…VTGY), and 186–206 (LHTF…FSMI). Residues His187 and His202 each coordinate heme b.

The protein belongs to the cytochrome b family. PetB subfamily. The 4 large subunits of the cytochrome b6-f complex are cytochrome b6, subunit IV (17 kDa polypeptide, PetD), cytochrome f and the Rieske protein, while the 4 small subunits are PetG, PetL, PetM and PetN. The complex functions as a dimer. It depends on heme b as a cofactor. Heme c is required as a cofactor.

It localises to the plastid. It is found in the chloroplast thylakoid membrane. Component of the cytochrome b6-f complex, which mediates electron transfer between photosystem II (PSII) and photosystem I (PSI), cyclic electron flow around PSI, and state transitions. This is Cytochrome b6 from Nymphaea alba (White water-lily).